The chain runs to 523 residues: Magnesium/proton exchanger 1 (523 aa).

The next 11 helical transmembrane spans lie at 24-44 (LLPI…CFIG), 88-108 (IADV…LATI), 125-145 (GTLV…CVVM), 157-177 (LGVW…LYII), 185-205 (VITL…LLHA), 325-345 (VIGI…AFVP), 349-369 (IAHG…IAYG), 377-397 (ISCV…AAGT), 428-448 (VNIY…NYFV), 461-481 (LSFS…VLVL), and 495-515 (MWAW…VVLS).

This sequence belongs to the Ca(2+):cation antiporter (CaCA) (TC 2.A.19) family. MHX subfamily.

Its subcellular location is the vacuole membrane. In terms of biological role, vacuolar transporter that exchanges protons with Mg(2+), Zn(2+) and Fe(2+) ions. May control the partitioning of Mg(2+) and Zn(2+) between plant organs. The sequence is that of Magnesium/proton exchanger 1 (MHX1) from Oryza sativa subsp. japonica (Rice).